The following is a 287-amino-acid chain: Pyridoxal kinase PdxY (287 aa).

Residues serine 10 and 45-46 each bind substrate; that span reads TQ. Residues aspartate 112, alanine 144, glutamate 149, lysine 182, and 209 to 212 each bind ATP; that span reads RPLV. Aspartate 224 is a binding site for substrate.

It belongs to the pyridoxine kinase family. PdxY subfamily. Homodimer. It depends on Mg(2+) as a cofactor.

The catalysed reaction is pyridoxal + ATP = pyridoxal 5'-phosphate + ADP + H(+). It functions in the pathway cofactor metabolism; pyridoxal 5'-phosphate salvage; pyridoxal 5'-phosphate from pyridoxal: step 1/1. Its function is as follows. Pyridoxal kinase involved in the salvage pathway of pyridoxal 5'-phosphate (PLP). Catalyzes the phosphorylation of pyridoxal to PLP. This is Pyridoxal kinase PdxY from Escherichia coli O6:H1 (strain CFT073 / ATCC 700928 / UPEC).